Reading from the N-terminus, the 294-residue chain is Acetyl-coenzyme A carboxylase carboxyl transferase subunit beta (294 aa).

In terms of domain architecture, CoA carboxyltransferase N-terminal spans Ile30–Glu294. The Zn(2+) site is built by Cys34, Cys37, Cys53, and Cys56. The C4-type zinc-finger motif lies at Cys34 to Cys56.

The protein belongs to the AccD/PCCB family. In terms of assembly, acetyl-CoA carboxylase is a heterohexamer composed of biotin carboxyl carrier protein (AccB), biotin carboxylase (AccC) and two subunits each of ACCase subunit alpha (AccA) and ACCase subunit beta (AccD). Zn(2+) is required as a cofactor.

The protein resides in the cytoplasm. The enzyme catalyses N(6)-carboxybiotinyl-L-lysyl-[protein] + acetyl-CoA = N(6)-biotinyl-L-lysyl-[protein] + malonyl-CoA. Its pathway is lipid metabolism; malonyl-CoA biosynthesis; malonyl-CoA from acetyl-CoA: step 1/1. In terms of biological role, component of the acetyl coenzyme A carboxylase (ACC) complex. Biotin carboxylase (BC) catalyzes the carboxylation of biotin on its carrier protein (BCCP) and then the CO(2) group is transferred by the transcarboxylase to acetyl-CoA to form malonyl-CoA. This chain is Acetyl-coenzyme A carboxylase carboxyl transferase subunit beta, found in Listeria monocytogenes serotype 4b (strain F2365).